A 474-amino-acid chain; its full sequence is MSFNSTSKELIEQNINGLLSIHDSWLRISMDSVANITNGFAFKSSEFNNRKDGVPLIRIRDVLKGNTSTYYSGQIPEGYWVYPEDLIVGMDGDFNATIWCSEPALLNQRVCKIEVQEDKYNKRFFYHALPGYLSAINANTSSVTVKHLSSRTLQDTLLPLPPLAEQKIIAEKLDTLLAQVDSTKARLEQIPQILKRFRQAVLAAAVTGRLTKEDKDFITKKVELDNYKILIPEDWSETILNNIINTQRPLCYGVVQPGDDIKDGIELIRVCDINDGEVDLNHLRKISKEIDLQYKRSKVRKNDILVTIVGAIGRIGIVREDINVNIARAVARISPEYKIIVPMFLHIWLSSPVMQTWLVQSSKEVARKTLNLKDLKNAFVPLPSIEEQHEIVRRVEQLFAYADSIEKQVNNALARVNNLTQSILAKAFRGELTAQWRAENPDLISGENSAAALLEKIKAERAASGGKKASRKKF.

Belongs to the type-I restriction system S methylase family. In terms of assembly, the type I restriction/modification system is composed of three polypeptides R, M and S. The restriction enzyme has stoichiometry R(2)M(2)S(1) while the methyltransferase is M(2)S(1).

Functionally, the specificity (S) subunit of a type I restriction enzyme; this subunit dictates DNA sequence specificity. The M and S subunits together form a methyltransferase (MTase) that methylates A-3 on the top strand and A-4 on the bottom strand of the sequence 5'-TGAN(8)TGCT-3'. In the presence of the R subunit the complex can also act as an endonuclease, binding to the same target sequence but cutting the DNA some distance from this site. Whether the DNA is cut or modified depends on the methylation state of the target sequence. When the target site is unmodified, the DNA is cut. When the target site is hemimethylated, the complex acts as a maintenance MTase modifying the DNA so that both strands become methylated. After locating a non-methylated recognition site, the enzyme complex serves as a molecular motor that translocates DNA in an ATP-dependent manner until a collision occurs that triggers cleavage. The chain is Type I restriction enzyme EcoBI specificity subunit from Escherichia coli.